We begin with the raw amino-acid sequence, 154 residues long: Protein X (154 aa).

Positions 28–50 (RPLPGPLGAVPPSSPSAVPADDG) are disordered. Over residues 33–48 (PLGAVPPSSPSAVPAD) the composition is skewed to low complexity. Residues 68–117 (PCALRFTSARRMETTVNAPWSLPTVLHKRTLGLSGWSMTWIEEYIKDCVF) form a mitochondrial targeting sequence region.

It belongs to the orthohepadnavirus protein X family. May form homodimer. May interact with host CEBPA, CFLAR, CREB1, DDB1, E4F1, HBXIP, HSPD1/HSP60, NFKBIA, POLR2E and SMAD4. Interacts with host SMC5-SMC6 complex and induces its degradation. Interacts with host TRPC4AP; leading to prevent ubiquitination of TRPC4AP. Interacts with host PLSCR1; this interaction promotes ubiquitination and degradation of HBx and impairs HBx-mediated cell proliferation. A fraction may be phosphorylated in insect cells and HepG2 cells, a human hepatoblastoma cell line. Phosphorylated in vitro by host protein kinase C or mitogen-activated protein kinase. N-acetylated in insect cells.

Its subcellular location is the host cytoplasm. The protein localises to the host nucleus. The protein resides in the host mitochondrion. In terms of biological role, multifunctional protein that plays a role in silencing host antiviral defenses and promoting viral transcription. Does not seem to be essential for HBV infection. May be directly involved in development of cirrhosis and liver cancer (hepatocellular carcinoma). Most of cytosolic activities involve modulation of cytosolic calcium. The effect on apoptosis is controversial depending on the cell types in which the studies have been conducted. May induce apoptosis by localizing in mitochondria and causing loss of mitochondrial membrane potential. May also modulate apoptosis by binding host CFLAR, a key regulator of the death-inducing signaling complex (DISC). Promotes viral transcription by using the host E3 ubiquitin ligase DDB1 to target the SMC5-SMC6 complex to proteasomal degradation. This host complex would otherwise bind to viral episomal DNA, and prevents its transcription. Moderately stimulates transcription of many different viral and cellular transcription elements. Promoters and enhancers stimulated by HBx contain DNA binding sites for NF-kappa-B, AP-1, AP-2, c-EBP, ATF/CREB, or the calcium-activated factor NF-AT. The protein is Protein X of Homo sapiens (Human).